A 349-amino-acid chain; its full sequence is Core protein VP7 (349 aa).

N-linked (GlcNAc...) asparagine; by host glycosylation occurs at asparagine 287.

Belongs to the orbivirus VP7 family. In terms of assembly, homotrimer that assemble in a complex of 260 capsomers on an inner scaffold composed of VP3.

The protein resides in the virion. Its function is as follows. The VP7 protein is one of the five proteins (with VP1, VP3, VP4, and VP6) which form the inner capsid of the virus. The protein is Core protein VP7 (Segment-7) of Antilocapra americana (Pronghorn).